We begin with the raw amino-acid sequence, 95 residues long: MNFRPLHDRVLVRRVAAEEKTAGGIIIPDTAKEKPQEGEVIAAGNGTHSEDGKVVPLDVKAGDRVLFGKWSGTEVRVDGEDLLIMKESDILGIIS.

The protein belongs to the GroES chaperonin family. Heptamer of 7 subunits arranged in a ring. Interacts with the chaperonin GroEL.

It localises to the cytoplasm. In terms of biological role, together with the chaperonin GroEL, plays an essential role in assisting protein folding. The GroEL-GroES system forms a nano-cage that allows encapsulation of the non-native substrate proteins and provides a physical environment optimized to promote and accelerate protein folding. GroES binds to the apical surface of the GroEL ring, thereby capping the opening of the GroEL channel. This chain is Co-chaperonin GroES, found in Zymomonas mobilis subsp. mobilis (strain ATCC 31821 / ZM4 / CP4).